The primary structure comprises 253 residues: Phosphate import ATP-binding protein PstB 3 (253 aa).

The region spanning 8–248 (LVINNLDLYY…PQDERTENYI (241 aa)) is the ABC transporter domain. 40–47 (GPSGCGKS) is a binding site for ATP.

It belongs to the ABC transporter superfamily. Phosphate importer (TC 3.A.1.7) family. The complex is composed of two ATP-binding proteins (PstB), two transmembrane proteins (PstC and PstA) and a solute-binding protein (PstS).

The protein localises to the cell membrane. It catalyses the reaction phosphate(out) + ATP + H2O = ADP + 2 phosphate(in) + H(+). Its function is as follows. Part of the ABC transporter complex PstSACB involved in phosphate import. Responsible for energy coupling to the transport system. In Streptococcus agalactiae serotype III (strain NEM316), this protein is Phosphate import ATP-binding protein PstB 3.